We begin with the raw amino-acid sequence, 478 residues long: Ribulose bisphosphate carboxylase large chain (478 aa).

Residues 1–2 (MS) constitute a propeptide that is removed on maturation. Positions 123 and 173 each coordinate substrate. Residue Lys-175 is the Proton acceptor of the active site. Residue Lys-177 coordinates substrate. Mg(2+) is bound by residues Lys-201, Asp-203, and Glu-204. Residue Lys-201 is modified to N6-carboxylysine. Position 208 is a phosphoserine (Ser-208). His-294 (proton acceptor) is an active-site residue. Residues Arg-295 and His-327 each contribute to the substrate site. Position 330 is a phosphothreonine (Thr-330). Position 379 (Ser-379) interacts with substrate.

Belongs to the RuBisCO large chain family. Type I subfamily. In terms of assembly, heterohexadecamer of 8 large chains and 8 small chains; disulfide-linked. The disulfide link is formed within the large subunit homodimers. Mg(2+) is required as a cofactor. Post-translationally, the disulfide bond which can form in the large chain dimeric partners within the hexadecamer appears to be associated with oxidative stress and protein turnover.

Its subcellular location is the plastid. It is found in the chloroplast. The catalysed reaction is 2 (2R)-3-phosphoglycerate + 2 H(+) = D-ribulose 1,5-bisphosphate + CO2 + H2O. The enzyme catalyses D-ribulose 1,5-bisphosphate + O2 = 2-phosphoglycolate + (2R)-3-phosphoglycerate + 2 H(+). RuBisCO catalyzes two reactions: the carboxylation of D-ribulose 1,5-bisphosphate, the primary event in carbon dioxide fixation, as well as the oxidative fragmentation of the pentose substrate in the photorespiration process. Both reactions occur simultaneously and in competition at the same active site. The sequence is that of Ribulose bisphosphate carboxylase large chain from Lepidium virginicum (Virginia pepperweed).